Reading from the N-terminus, the 169-residue chain is Phosphopantetheine adenylyltransferase (169 aa).

Threonine 13 is a substrate binding site. ATP is bound by residues 13 to 14 and histidine 21; that span reads TF. Substrate-binding residues include lysine 45, leucine 82, and arginine 96. Residues 97–99, glutamate 107, and 132–138 each bind ATP; these read GLR and HQFISSR.

This sequence belongs to the bacterial CoaD family. In terms of assembly, homohexamer. The cofactor is Mg(2+).

The protein resides in the cytoplasm. It carries out the reaction (R)-4'-phosphopantetheine + ATP + H(+) = 3'-dephospho-CoA + diphosphate. Its pathway is cofactor biosynthesis; coenzyme A biosynthesis; CoA from (R)-pantothenate: step 4/5. Reversibly transfers an adenylyl group from ATP to 4'-phosphopantetheine, yielding dephospho-CoA (dPCoA) and pyrophosphate. The polypeptide is Phosphopantetheine adenylyltransferase (Acidiphilium cryptum (strain JF-5)).